The following is a 249-amino-acid chain: Probable transcriptional regulatory protein OTBS_0251 (249 aa).

This sequence belongs to the TACO1 family.

It is found in the cytoplasm. This is Probable transcriptional regulatory protein OTBS_0251 from Orientia tsutsugamushi (strain Boryong) (Rickettsia tsutsugamushi).